A 422-amino-acid chain; its full sequence is Putative polyketide beta-ketoacyl synthase 1 (422 aa).

The region spanning 2–416 is the Ketosynthase family 3 (KS3) domain; it reads TRRVAVTGIG…GFQSAVLLTG (415 aa). Residues C169, H309, and H346 each act as for beta-ketoacyl synthase activity in the active site.

The protein belongs to the thiolase-like superfamily. Beta-ketoacyl-ACP synthases family.

The protein operates within antibiotic biosynthesis; curamycin biosynthesis. The sequence is that of Putative polyketide beta-ketoacyl synthase 1 (curA) from Streptomyces cyaneus (Streptomyces curacoi).